Consider the following 376-residue polypeptide: Pyruvate dehydrogenase E1 component subunit beta-2, mitochondrial (376 aa).

A mitochondrion-targeting transit peptide spans 1-36; sequence MLGAARRQLGSGPMLGQVLRRLRPATAAAADAARAY. Thiamine diphosphate is bound at residue glutamate 99. The K(+) site is built by isoleucine 152, alanine 200, isoleucine 201, and aspartate 203.

Tetramer of 2 alpha and 2 beta subunits. It depends on thiamine diphosphate as a cofactor.

The protein localises to the mitochondrion matrix. The catalysed reaction is N(6)-[(R)-lipoyl]-L-lysyl-[protein] + pyruvate + H(+) = N(6)-[(R)-S(8)-acetyldihydrolipoyl]-L-lysyl-[protein] + CO2. Its function is as follows. The pyruvate dehydrogenase complex catalyzes the overall conversion of pyruvate to acetyl-CoA and CO(2). It contains multiple copies of three enzymatic components: pyruvate dehydrogenase (E1), dihydrolipoamide acetyltransferase (E2) and lipoamide dehydrogenase (E3). This is Pyruvate dehydrogenase E1 component subunit beta-2, mitochondrial from Oryza sativa subsp. japonica (Rice).